Reading from the N-terminus, the 265-residue chain is MKNIHKIFSPEKKGKEKISVVTCYDFSFARILNETEIDSILVGDSLGMVFQGNTSTLPVTLEEMIYHTKAVRRGAPDKFLIADLPFLSYQTSIEEGIRSAGKIMKESDCDAVKIEGGSEFICELVSILKQIGVPVMGHLGLTPQSVHVFGGHRVQGKGEESSSKLLKESISLFESGVFSMVLEMIPAELGKKVSQEVGVPTIGIGAGSDCDGQVLVLNDLLGLDINFQPKFLKKFSNLHSIVKEAIADYDKEVKSGEFPGKDHSF.

Mg(2+) contacts are provided by Asp-44 and Asp-83. Residues 44-45, Asp-83, and Lys-113 each bind 3-methyl-2-oxobutanoate; that span reads DS. Glu-115 serves as a coordination point for Mg(2+). Residue Glu-183 is the Proton acceptor of the active site.

The protein belongs to the PanB family. In terms of assembly, homodecamer; pentamer of dimers. Mg(2+) is required as a cofactor.

The protein localises to the cytoplasm. It carries out the reaction 3-methyl-2-oxobutanoate + (6R)-5,10-methylene-5,6,7,8-tetrahydrofolate + H2O = 2-dehydropantoate + (6S)-5,6,7,8-tetrahydrofolate. Its pathway is cofactor biosynthesis; (R)-pantothenate biosynthesis; (R)-pantoate from 3-methyl-2-oxobutanoate: step 1/2. Catalyzes the reversible reaction in which hydroxymethyl group from 5,10-methylenetetrahydrofolate is transferred onto alpha-ketoisovalerate to form ketopantoate. In Leptospira interrogans serogroup Icterohaemorrhagiae serovar copenhageni (strain Fiocruz L1-130), this protein is 3-methyl-2-oxobutanoate hydroxymethyltransferase.